We begin with the raw amino-acid sequence, 543 residues long: tRNA (guanine(37)-N(1))-methyltransferase (543 aa).

The transit peptide at 1 to 59 (MLKSLCFVIRPAIVSRPQFRLPTIARLSLRQFQNQPQSVGFFTMAPLETRALALSPSAT) directs the protein to the mitochondrion. S-adenosyl-L-methionine-binding positions include histidine 282, 320–321 (DL), and 348–349 (DG). The interval 366–405 (DPAPPPKVSNRQRDREAKEARRKREQAKAAGQPVTETAPM) is disordered. S-adenosyl-L-methionine is bound at residue asparagine 431.

It belongs to the class I-like SAM-binding methyltransferase superfamily. TRM5/TYW2 family. In terms of assembly, monomer.

The protein resides in the mitochondrion matrix. It is found in the nucleus. It localises to the cytoplasm. The catalysed reaction is guanosine(37) in tRNA + S-adenosyl-L-methionine = N(1)-methylguanosine(37) in tRNA + S-adenosyl-L-homocysteine + H(+). Functionally, specifically methylates the N1 position of guanosine-37 in various cytoplasmic and mitochondrial tRNAs. Methylation is not dependent on the nature of the nucleoside 5' of the target nucleoside. This is the first step in the biosynthesis of wybutosine (yW), a modified base adjacent to the anticodon of tRNAs and required for accurate decoding. This chain is tRNA (guanine(37)-N(1))-methyltransferase, found in Cryptococcus neoformans var. neoformans serotype D (strain JEC21 / ATCC MYA-565) (Filobasidiella neoformans).